The chain runs to 155 residues: Ribosomal RNA large subunit methyltransferase H (155 aa).

S-adenosyl-L-methionine contacts are provided by residues I71, G103, and 122-127; that span reads FGRMVW.

This sequence belongs to the RNA methyltransferase RlmH family. In terms of assembly, homodimer.

The protein localises to the cytoplasm. The catalysed reaction is pseudouridine(1915) in 23S rRNA + S-adenosyl-L-methionine = N(3)-methylpseudouridine(1915) in 23S rRNA + S-adenosyl-L-homocysteine + H(+). Functionally, specifically methylates the pseudouridine at position 1915 (m3Psi1915) in 23S rRNA. The chain is Ribosomal RNA large subunit methyltransferase H from Cereibacter sphaeroides (strain ATCC 17025 / ATH 2.4.3) (Rhodobacter sphaeroides).